Here is a 315-residue protein sequence, read N- to C-terminus: L-lactate dehydrogenase (315 aa).

Positions 12, 33, and 65 each coordinate NAD(+). Residues Gln-82, Arg-88, and Asn-120–Asp-123 contribute to the substrate site. Residues Ile-118 to Asn-120 and Ser-143 each bind NAD(+). Asp-148–Arg-151 is a substrate binding site. Beta-D-fructose 1,6-bisphosphate contacts are provided by Arg-153 and His-168. The Proton acceptor role is filled by His-175. Residue Tyr-219 is modified to Phosphotyrosine. Position 228 (Thr-228) interacts with substrate.

It belongs to the LDH/MDH superfamily. LDH family. Homotetramer.

The protein localises to the cytoplasm. The catalysed reaction is (S)-lactate + NAD(+) = pyruvate + NADH + H(+). Its pathway is fermentation; pyruvate fermentation to lactate; (S)-lactate from pyruvate: step 1/1. With respect to regulation, allosterically activated by fructose 1,6-bisphosphate (FBP). Its function is as follows. Catalyzes the conversion of lactate to pyruvate. The protein is L-lactate dehydrogenase of Mycoplasmopsis pulmonis (strain UAB CTIP) (Mycoplasma pulmonis).